A 124-amino-acid polypeptide reads, in one-letter code: MIGLSYLLVQVVSFAGILVIDHRWKLAAFRAPAAAALAVTASVALLLTWDVLGVRSGVFFRGQTDFMTGLLVAPEIPFEEVVFLAFLSHLALVCAAGVSRAVDHARDSRAARASRPSRMTGERR.

3 consecutive transmembrane segments (helical) span residues 1-21, 34-54, and 78-98; these read MIGLSYLLVQVVSFAGILVID, AAALAVTASVALLLTWDVLGV, and FEEVVFLAFLSHLALVCAAGV.

This sequence belongs to the lycopene beta-cyclase family. In terms of assembly, may form a complex with LbtBC.

It localises to the cell membrane. It functions in the pathway carotenoid biosynthesis. Its function is as follows. Involved in the biosynthesis of C(50) beta-cyclic carotenoids. May have C(50) carotenoid beta-cyclase activity and produce the C(50) beta-cyclic carotenoid C.p.450 from the C(50) carotenoid dihydrobisanhydrobacterioruberin (DH-BABR). This is Putative C(50) carotenoid beta-cyclase subunit A from Dietzia sp. (strain CQ4).